Here is a 407-residue protein sequence, read N- to C-terminus: Sensor histidine kinase YdfH (407 aa).

The Cytoplasmic segment spans residues Met-1 to Arg-25. The next 2 membrane-spanning stretches (helical) occupy residues Val-26–Ser-46 and Gly-47–Leu-67. Topologically, residues His-68–Arg-78 are cytoplasmic. 2 helical membrane-spanning segments follow: residues Val-79–Gly-99 and Phe-100–Ala-120. Residues Asp-121–Thr-125 lie on the Cytoplasmic side of the membrane. Residues Phe-126–Gly-146 form a helical membrane-spanning segment. At Glu-147–His-150 the chain is on the extracellular side. A helical membrane pass occupies residues Phe-151 to Ala-171. At Gln-172 to Glu-407 the chain is on the cytoplasmic side. Residues Glu-201–Gly-402 enclose the Histidine kinase domain. Phosphohistidine; by autocatalysis is present on His-210.

The protein resides in the cell membrane. The enzyme catalyses ATP + protein L-histidine = ADP + protein N-phospho-L-histidine.. Member of the two-component regulatory system YdfH/YdfI. May activate YdfI by phosphorylation. The chain is Sensor histidine kinase YdfH (ydfH) from Bacillus subtilis (strain 168).